The primary structure comprises 679 residues: Glycine--tRNA ligase beta subunit (679 aa).

This sequence belongs to the class-II aminoacyl-tRNA synthetase family. In terms of assembly, tetramer of two alpha and two beta subunits.

Its subcellular location is the cytoplasm. The enzyme catalyses tRNA(Gly) + glycine + ATP = glycyl-tRNA(Gly) + AMP + diphosphate. The sequence is that of Glycine--tRNA ligase beta subunit from Streptococcus pyogenes serotype M49 (strain NZ131).